The chain runs to 221 residues: MDPYKNLNPKGYQRQRPFSSAGESGGSGGSGTAHETDDNKKKKKLLHRDIERQRRQEMATLFATLRTHLPLKYIKGKRAVSDHVNGAVNFIKDTEARIKELSARRDELSRETGQGYKSNPDPGKTGSDVGKSEPATVMVQPHVSGLEVVVSSNSSGPEALPLSKVLETIQEKGLEVMSSFTTRVNDRLMHTIQVEVNSFGCIDLLWLQQKLVEDLILSTGY.

Disordered stretches follow at residues 1-46 (MDPY…KKLL) and 104-132 (RRDE…VGKS). The bHLH domain maps to 42–94 (KKKLLHRDIERQRRQEMATLFATLRTHLPLKYIKGKRAVSDHVNGAVNFIKDT).

As to quaternary structure, homodimer.

The protein localises to the nucleus. This chain is Transcription factor bHLH126 (BHLH126), found in Arabidopsis thaliana (Mouse-ear cress).